Reading from the N-terminus, the 98-residue chain is mRNA interferase toxin MqsR (98 aa).

In terms of assembly, might be a dimer. Also reported to be a monomer. Crystallizes as a heterotetramer with MqsA, MqsR-MqsA(2)-MqsR. Purifies as a possible heterohexamer of 2 MqsR dimers and 1 MqsA dimer. When the 2 dissociate the MsqR mRNA interferase becomes active.

Its function is as follows. Toxic component of a type II toxin-antitoxin (TA) system. Plays a significant role in the control of biofilm formation and induction of persister cells in the presence of antibiotics. An mRNA interferase which has been reported to be translation-independent. It has also been reported to be translation-dependent. Cleavage has been reported to occur on either side of G in the sequence GCU. Also reported to cleave after C in GC(A/U) sequences. There are only 14 genes in E.coli W3110 (and probably also MG1655) that do not have a GCU sequence and thus are resistant to the mRNA interferase activity; among these is the gene for toxin GhoT. Overexpression of MqsR causes cessation of cell growth and inhibits cell proliferation via inhibition of translation as well as increasing persister cell formation; these effects are overcome by concomitant or subsequent expression of antitoxin MqsA. Cross-talk can occur between different TA systems. Ectopic expression of this toxin induces transcription of the relBEF TA system operon with specific cleavage of the relBEF mRNA produced. Regulates the expression of GhoT/GhoS, a type V TA system. Persistence depends on toxin GhoT activity, which MqsR controls at the post-transcriptional level by selectively degrading the antitoxin ghoS segment of the ghoST mRNA. Overexpression leads to a dramatic increase in tolerance to the antibiotic ofloxacin. This TA system mediates cell growth during bile acid deoxycholate stress by degrading mRNA for probable deoxycholate-binding protein YgiS; bile acid detergents such as deoxycholate are important for host defense against bacterial growth in the gall bladder and duodenum. In terms of biological role, initially reported to act as a cotranscription factor with MqsA. Following further experiments, the MqsR-MqsA complex does not bind DNA and all reported data are actually due to a small fraction of free MqsA alone binding DNA. Addition of MqsR to a preformed MqsA-promoter DNA complex causes dissociation of the MqsA-DNA complex, probably causing derepression of MqsA-repressed transcripts. Does not bind DNA in the presence or absence of MqsA. The chain is mRNA interferase toxin MqsR from Escherichia coli (strain K12).